The chain runs to 335 residues: UDP-N-acetylglucosamine--N-acetylmuramyl-(pentapeptide) pyrophosphoryl-undecaprenol N-acetylglucosamine transferase (335 aa).

Residues 9–11 (TGG), asparagine 123, serine 176, and glutamine 274 contribute to the UDP-N-acetyl-alpha-D-glucosamine site.

The protein belongs to the glycosyltransferase 28 family. MurG subfamily.

It localises to the cell inner membrane. It carries out the reaction di-trans,octa-cis-undecaprenyl diphospho-N-acetyl-alpha-D-muramoyl-L-alanyl-D-glutamyl-meso-2,6-diaminopimeloyl-D-alanyl-D-alanine + UDP-N-acetyl-alpha-D-glucosamine = di-trans,octa-cis-undecaprenyl diphospho-[N-acetyl-alpha-D-glucosaminyl-(1-&gt;4)]-N-acetyl-alpha-D-muramoyl-L-alanyl-D-glutamyl-meso-2,6-diaminopimeloyl-D-alanyl-D-alanine + UDP + H(+). It functions in the pathway cell wall biogenesis; peptidoglycan biosynthesis. Cell wall formation. Catalyzes the transfer of a GlcNAc subunit on undecaprenyl-pyrophosphoryl-MurNAc-pentapeptide (lipid intermediate I) to form undecaprenyl-pyrophosphoryl-MurNAc-(pentapeptide)GlcNAc (lipid intermediate II). This is UDP-N-acetylglucosamine--N-acetylmuramyl-(pentapeptide) pyrophosphoryl-undecaprenol N-acetylglucosamine transferase from Campylobacter fetus subsp. fetus (strain 82-40).